Consider the following 156-residue polypeptide: Ribosomal RNA large subunit methyltransferase H (156 aa).

S-adenosyl-L-methionine-binding positions include Gly104 and 123–128 (LSPMVM).

Belongs to the RNA methyltransferase RlmH family. As to quaternary structure, homodimer.

It is found in the cytoplasm. The catalysed reaction is pseudouridine(1915) in 23S rRNA + S-adenosyl-L-methionine = N(3)-methylpseudouridine(1915) in 23S rRNA + S-adenosyl-L-homocysteine + H(+). Its function is as follows. Specifically methylates the pseudouridine at position 1915 (m3Psi1915) in 23S rRNA. The sequence is that of Ribosomal RNA large subunit methyltransferase H from Bdellovibrio bacteriovorus (strain ATCC 15356 / DSM 50701 / NCIMB 9529 / HD100).